The chain runs to 126 residues: Fluoride-specific ion channel FluC (126 aa).

A run of 4 helical transmembrane segments spans residues 2–22 (LTFAPLNFLAIGVGATLGAWL), 37–57 (WGTLTANLVGGYLIGVMVALI), 65–85 (AWIRLAAVTGFLGGLTTFSTF), and 101–121 (AAAYAGASLAGSLAMTGLATV). Na(+)-binding residues include Gly-77 and Thr-80.

The protein belongs to the fluoride channel Fluc/FEX (TC 1.A.43) family.

Its subcellular location is the cell inner membrane. It catalyses the reaction fluoride(in) = fluoride(out). Na(+) is not transported, but it plays an essential structural role and its presence is essential for fluoride channel function. Functionally, fluoride-specific ion channel. Important for reducing fluoride concentration in the cell, thus reducing its toxicity. The sequence is that of Fluoride-specific ion channel FluC from Bordetella parapertussis (strain 12822 / ATCC BAA-587 / NCTC 13253).